The sequence spans 158 residues: MEPSEGASPGGLVKEVDMPQAALSAPVPVTGTSGQSPMAEEELGIPIPAPGLLQVTERRQPLSSVSSLEVHFDLLDLTELTDMSDQELAEVFADSDDENVASDSHAGLHPLPRAGCLRSPSWTRTRAEQNREKQPFGDPERQPAIVDTILTVERPKED.

Residues 1–38 are disordered; it reads MEPSEGASPGGLVKEVDMPQAALSAPVPVTGTSGQSPM. Phosphoserine is present on residues serine 95 and serine 119. A disordered region spans residues 96–158; the sequence is DDENVASDSH…ILTVERPKED (63 aa). The span at 125-141 shows a compositional bias: basic and acidic residues; the sequence is TRAEQNREKQPFGDPER.

The protein belongs to the dysbindin family.

In Bos taurus (Bovine), this protein is Dysbindin domain-containing protein 1 (DBNDD1).